Reading from the N-terminus, the 433-residue chain is Enolase (433 aa).

Gln167 serves as a coordination point for (2R)-2-phosphoglycerate. The Proton donor role is filled by Glu209. Mg(2+) contacts are provided by Asp246, Glu291, and Asp318. The (2R)-2-phosphoglycerate site is built by Lys343, Arg372, Ser373, and Lys394. The active-site Proton acceptor is the Lys343.

This sequence belongs to the enolase family. As to quaternary structure, component of the RNA degradosome, a multiprotein complex involved in RNA processing and mRNA degradation. Requires Mg(2+) as cofactor.

It is found in the cytoplasm. Its subcellular location is the secreted. It localises to the cell surface. The catalysed reaction is (2R)-2-phosphoglycerate = phosphoenolpyruvate + H2O. It functions in the pathway carbohydrate degradation; glycolysis; pyruvate from D-glyceraldehyde 3-phosphate: step 4/5. In terms of biological role, catalyzes the reversible conversion of 2-phosphoglycerate (2-PG) into phosphoenolpyruvate (PEP). It is essential for the degradation of carbohydrates via glycolysis. The polypeptide is Enolase (Marinomonas sp. (strain MWYL1)).